The sequence spans 391 residues: Suppressor APC domain-containing protein 2 (391 aa).

The segment at 1–20 (MAVAAMAERGRLSHAAPAPS) is disordered. The residue at position 218 (threonine 218) is a Phosphothreonine. Positions 226-277 (SLLKQMKELDQEQEVLLQGLEMMARGRDWYQQQLQRVQERQRRLSQSRAAAD) form a coiled coil. The residue at position 283 (serine 283) is a Phosphoserine. Residues 340-381 (LKEQNRLLTQEVTDKSERITQLEQEKSALIKQLFEARALSQQ) are a coiled coil.

In terms of assembly, interacts with a spindle orientation complex at least composed of GNAI1, GPSM2 and NUMA1. Interacts with GPSM2 (via TPR motifs); this interaction is required to prevent GPSM2 anchoring at the mitotic apical cortex and is inhibited in presence of NUMA1 in a dose dependent manner. Interacts with PARD3. In terms of tissue distribution, expressed in the retina. Expressed in retinal progenitor cells and newly differentiated neurons but not in mature retinal cells (at protein level).

The protein resides in the cytoplasm. It localises to the nucleus. The protein localises to the cell cortex. Its subcellular location is the apical cell membrane. It is found in the cell junction. The protein resides in the tight junction. Its function is as follows. Plays a role in planar mitotic spindle orientation in retinal progenitor cells (RPCs) and promotes the production of symmetric terminal divisions. Negatively regulates the mitotic apical cortex localization of GPSM2. Involved also in positive regulation of cell proliferation and tumor cell growth. This Mus musculus (Mouse) protein is Suppressor APC domain-containing protein 2.